We begin with the raw amino-acid sequence, 353 residues long: 4-hydroxy-3-methylbut-2-en-1-yl diphosphate synthase (flavodoxin) (353 aa).

[4Fe-4S] cluster contacts are provided by cysteine 265, cysteine 268, cysteine 300, and glutamate 307.

The protein belongs to the IspG family. It depends on [4Fe-4S] cluster as a cofactor.

It carries out the reaction (2E)-4-hydroxy-3-methylbut-2-enyl diphosphate + oxidized [flavodoxin] + H2O + 2 H(+) = 2-C-methyl-D-erythritol 2,4-cyclic diphosphate + reduced [flavodoxin]. It participates in isoprenoid biosynthesis; isopentenyl diphosphate biosynthesis via DXP pathway; isopentenyl diphosphate from 1-deoxy-D-xylulose 5-phosphate: step 5/6. Its function is as follows. Converts 2C-methyl-D-erythritol 2,4-cyclodiphosphate (ME-2,4cPP) into 1-hydroxy-2-methyl-2-(E)-butenyl 4-diphosphate. The protein is 4-hydroxy-3-methylbut-2-en-1-yl diphosphate synthase (flavodoxin) of Sulfurihydrogenibium sp. (strain YO3AOP1).